A 103-amino-acid chain; its full sequence is ATP-dependent Clp protease adapter protein ClpS 2 (103 aa).

This sequence belongs to the ClpS family. Binds to the N-terminal domain of the chaperone ClpA.

Its function is as follows. Involved in the modulation of the specificity of the ClpAP-mediated ATP-dependent protein degradation. In Agrobacterium fabrum (strain C58 / ATCC 33970) (Agrobacterium tumefaciens (strain C58)), this protein is ATP-dependent Clp protease adapter protein ClpS 2.